The chain runs to 313 residues: Porphobilinogen deaminase (313 aa).

Cysteine 242 carries the post-translational modification S-(dipyrrolylmethanemethyl)cysteine.

It belongs to the HMBS family. As to quaternary structure, monomer. It depends on dipyrromethane as a cofactor.

The enzyme catalyses 4 porphobilinogen + H2O = hydroxymethylbilane + 4 NH4(+). It functions in the pathway porphyrin-containing compound metabolism; protoporphyrin-IX biosynthesis; coproporphyrinogen-III from 5-aminolevulinate: step 2/4. Functionally, tetrapolymerization of the monopyrrole PBG into the hydroxymethylbilane pre-uroporphyrinogen in several discrete steps. This chain is Porphobilinogen deaminase, found in Pseudomonas fluorescens (strain Pf0-1).